We begin with the raw amino-acid sequence, 32 residues long: Apolipophorin-3 (32 aa).

The disordered stretch occupies residues D1 to K32. A compositionally biased stretch (polar residues) spans K20–K32.

This sequence belongs to the insect apolipophorin-3 family. As to quaternary structure, equilibrium between a soluble monomer and a bound lipoprotein form. Apolipophorin-3 associates with lipophorin during lipid loading until each particle contains 9 or 14 molecules of apolipophorin-3. In terms of tissue distribution, hemolymph.

It is found in the secreted. Assists in the loading of diacylglycerol, generated from triacylglycerol stores in the fat body through the action of adipokinetic hormone, into lipophorin, the hemolymph lipoprotein. It increases the lipid carrying capacity of lipophorin by covering the expanding hydrophobic surface resulting from diacylglycerol uptake. It thus plays a critical role in the transport of lipids during flight in several species of insects. The chain is Apolipophorin-3 from Diatraea grandiosella (Southwestern corn borer).